Consider the following 566-residue polypeptide: F-box/WD repeat-containing protein 5 (566 aa).

Positions 3–49 constitute an F-box domain; it reads EGGTPLLPDSLVYQIFLSLGPADVLAAGLVCRQWQAVSRDEFLWREQ. 4 WD repeats span residues 83–125, 126–178, 179–238, and 239–281; these read VEVQ…DLTI, SLLH…LDSF, ALLS…VKRL, and FKIQ…RIFD. Position 151 is a phosphoserine; by PLK4 (Ser151). At Ser284 the chain carries Phosphoserine. Positions 303 to 311 match the D-box motif; sequence RHFLDRVLE. WD repeat units follow at residues 394–447, 458–501, and 502–539; these read ALDH…DLLV, RALR…RHYN, and ICLARLRHEDVVNSVVFSPQEQELLLTASDDATIKAWR.

It belongs to the FBXW5 family. Part of the SCF (SKP1-CUL1-F-box) E3 ubiquitin-protein ligase complex SCF(FBXW5) composed of CUL1, SKP1, RBX1 and FBXW5. Component of the DCX(FBXW5) E3 ubiquitin ligase complex, at least composed of (CUL4A or CUL4B), DDB1, FBXW5 and RBX1. Interacts with CDC20, EPS8, TSC1, TSC2 and SASS6. Interacts with TNFAIP8L1; TNFAIP8L1 competes with TSC2 to bind FBXW5 increasing TSC2 stability by preventing its ubiquitination. Phosphorylated at Ser-151 by PLK4 during the G1/S transition, leading to inhibit its ability to ubiquitinate SASS6. Post-translationally, ubiquitinated and degraded by the APC/C complex during mitosis and G1 phase.

Its subcellular location is the cytoplasm. It functions in the pathway protein modification; protein ubiquitination. Functionally, substrate recognition component of both SCF (SKP1-CUL1-F-box protein) and DCX (DDB1-CUL4-X-box) E3 ubiquitin-protein ligase complexes. Substrate recognition component of the SCF(FBXW5) E3 ubiquitin-protein ligase complex which mediates the ubiquitination and subsequent proteasomal degradation of SASS6 during S phase, leading to prevent centriole reduplication. The SCF(FBXW5) complex also mediates ubiquitination and degradation of actin-regulator EPS8 during G2 phase, leading to the transient degradation of EPS8 and subsequent cell shape changes required to allow mitotic progression. Substrate-specific adapter of the DCX(FBXW5) E3 ubiquitin-protein ligase complex which mediates the polyubiquitination and subsequent degradation of TSC2. May also act as a negative regulator of MAP3K7/TAK1 signaling in the interleukin-1B (IL1B) signaling pathway. This chain is F-box/WD repeat-containing protein 5 (FBXW5), found in Homo sapiens (Human).